The chain runs to 1373 residues: DNA-directed RNA polymerase subunit beta (1373 aa).

This sequence belongs to the RNA polymerase beta chain family. As to quaternary structure, the RNAP catalytic core consists of 2 alpha, 1 beta, 1 beta' and 1 omega subunit. When a sigma factor is associated with the core the holoenzyme is formed, which can initiate transcription.

It catalyses the reaction RNA(n) + a ribonucleoside 5'-triphosphate = RNA(n+1) + diphosphate. Its function is as follows. DNA-dependent RNA polymerase catalyzes the transcription of DNA into RNA using the four ribonucleoside triphosphates as substrates. This is DNA-directed RNA polymerase subunit beta from Rickettsia massiliae (strain Mtu5).